The following is a 64-amino-acid chain: Conotoxin VnMRCL-04 (64 aa).

An N-terminal signal peptide occupies residues 1–22 (MRCLPVFVILLLLIASAPSVDA). Residues 23 to 48 (RPKTKDDVPLASFHGNAERTLLNILR) constitute a propeptide that is removed on maturation. At W63 the chain carries Tryptophan amide.

The protein belongs to the conotoxin T superfamily. Post-translationally, contains 2 disulfide bonds that can be either 'C1-C3, C2-C4' or 'C1-C4, C2-C3', since these disulfide connectivities have been observed for conotoxins with cysteine framework V (for examples, see AC P0DQQ7 and AC P81755). Expressed by the venom duct.

Its subcellular location is the secreted. The polypeptide is Conotoxin VnMRCL-04 (Conus ventricosus (Mediterranean cone)).